A 290-amino-acid chain; its full sequence is L-proline cis-3-hydroxylase 2 (290 aa).

Residues His107, Asp109, and His158 each contribute to the Fe cation site. Arg168 contacts 2-oxoglutarate.

The protein belongs to the L-proline cis-4-/cis-3-hydroxylase family. Homodimer. Fe(2+) serves as cofactor.

The enzyme catalyses L-proline + 2-oxoglutarate + O2 = cis-3-hydroxy-L-proline + succinate + CO2. With respect to regulation, inhibited by metal ions such as Co(2+), Zn(2+), Ni(2+) or Cu(2+). Is also inhibited by EDTA in vitro. Its function is as follows. Dioxygenase that catalyzes the 2-oxoglutarate-dependent selective hydroxylation of free L-proline to cis-3-hydroxy-L-proline (cis-3-Hyp). The sequence is that of L-proline cis-3-hydroxylase 2 from Streptomyces sp.